A 413-amino-acid chain; its full sequence is Heparan-sulfate 6-O-sulfotransferase 1-A (413 aa).

At 9-15 (MVERSSK) the chain is on the cytoplasmic side. A helical; Signal-anchor for type II membrane protein transmembrane segment spans residues 16–36 (FLFIVVGSVLFMLILYQYVAP). Over 37–413 (GMMNFGSPHG…DYMNHIINRW (377 aa)) the chain is Lumenal. 92 to 100 (HIQKTGGTT) is a binding site for 3'-phosphoadenylyl sulfate. Substrate-binding positions include 122–123 (KK), Arg-139, Trp-144, and His-149. The Proton acceptor role is filled by His-149. Residues Arg-183 and Ser-191 each coordinate 3'-phosphoadenylyl sulfate. His-195 and Trp-202 together coordinate substrate. Asn-262 is a glycosylation site (N-linked (GlcNAc...) asparagine). 315-317 (MQY) provides a ligand contact to 3'-phosphoadenylyl sulfate. Asn-318 is a glycosylation site (N-linked (GlcNAc...) asparagine). 321–322 (RA) contacts 3'-phosphoadenylyl sulfate. The N-linked (GlcNAc...) asparagine glycan is linked to Asn-329. Residues 374 to 401 (PLFPFRRTSSSDSTFRDDAPESEGSRLP) form a disordered region.

It belongs to the sulfotransferase 6 family. In terms of tissue distribution, during somitogenesis, first expressed in polster and presumptive forebrain. During mid-somitogenesis, expressed in eye, hindbrain and anterior spinal cord. During late somitogenesis, strong expression in eye and hindbrain, decreased levels in midbrain and anterior spinal cord. At 24 hours post-fertilization (hpf), expressed in neural retina and lens, brain and anterior spinal cord. At 36 hpf, retinal expression is confined to the ciliary marginal zone and there is strong expression in tectum, rhombomeres and otic vesicle. At 48 hpf, expressed in retinal ganglion cells and in tectum, rhombomeres and pectoral fin. Not detected in the vasculature during embryogenesis.

Its subcellular location is the membrane. The catalysed reaction is alpha-D-glucosaminyl-[heparan sulfate](n) + 3'-phosphoadenylyl sulfate = 6-sulfo-alpha-D-glucosaminyl-[heparan sulfate](n) + adenosine 3',5'-bisphosphate + H(+). Its function is as follows. 6-O-sulfation enzyme which catalyzes the transfer of sulfate from 3'-phosphoadenosine 5'-phosphosulfate (PAPS) to position 6 of the N-sulfoglucosamine residue (GlcNS) of heparan sulfate. The sequence is that of Heparan-sulfate 6-O-sulfotransferase 1-A from Danio rerio (Zebrafish).